Here is a 261-residue protein sequence, read N- to C-terminus: Cytochrome c oxidase subunit 3 (261 aa).

Over 1-15 the chain is Mitochondrial matrix; sequence MAHQAHAYHMVDPSP. Residues 16 to 34 form a helical membrane-spanning segment; the sequence is WPLTGAVAALLLTSGLAIW. The Mitochondrial intermembrane segment spans residues 35 to 40; it reads FPFNSL. A helical membrane pass occupies residues 41 to 66; sequence ILLTLGLVLLLLTMYQWWRDIVREGT. The Mitochondrial matrix portion of the chain corresponds to 67 to 72; it reads FQGHHT. A helical membrane pass occupies residues 73–105; sequence PPVQKGLRYGMILFITSEVFFFLGFFWAFYHSS. Topologically, residues 106 to 128 are mitochondrial intermembrane; the sequence is LAPTPELGGCWPPTGIVPLNPFE. Residues 129-152 traverse the membrane as a helical segment; sequence VPLLNTAVLLASGVTVTWAHHSIM. Residues 153-155 are Mitochondrial matrix-facing; the sequence is EGE. Residues 156 to 183 form a helical membrane-spanning segment; that stretch reads RKQAIHSLTLTILLGFYFTFLQAMEYYE. Residues 184–190 are Mitochondrial intermembrane-facing; that stretch reads APFTIAD. Residues 191 to 223 form a helical membrane-spanning segment; it reads GVYGSTFFVATGFHGLHVIIGSTFLAICLLRQI. Over 224-232 the chain is Mitochondrial matrix; the sequence is RYHFTSEHH. A helical membrane pass occupies residues 233–256; the sequence is FGFEAAAWYWHFVDVVWLFLYISI. Topologically, residues 257–261 are mitochondrial intermembrane; sequence YWWGS.

It belongs to the cytochrome c oxidase subunit 3 family. Component of the cytochrome c oxidase (complex IV, CIV), a multisubunit enzyme composed of 14 subunits. The complex is composed of a catalytic core of 3 subunits MT-CO1, MT-CO2 and MT-CO3, encoded in the mitochondrial DNA, and 11 supernumerary subunits COX4I, COX5A, COX5B, COX6A, COX6B, COX6C, COX7A, COX7B, COX7C, COX8 and NDUFA4, which are encoded in the nuclear genome. The complex exists as a monomer or a dimer and forms supercomplexes (SCs) in the inner mitochondrial membrane with NADH-ubiquinone oxidoreductase (complex I, CI) and ubiquinol-cytochrome c oxidoreductase (cytochrome b-c1 complex, complex III, CIII), resulting in different assemblies (supercomplex SCI(1)III(2)IV(1) and megacomplex MCI(2)III(2)IV(2)).

Its subcellular location is the mitochondrion inner membrane. It catalyses the reaction 4 Fe(II)-[cytochrome c] + O2 + 8 H(+)(in) = 4 Fe(III)-[cytochrome c] + 2 H2O + 4 H(+)(out). Functionally, component of the cytochrome c oxidase, the last enzyme in the mitochondrial electron transport chain which drives oxidative phosphorylation. The respiratory chain contains 3 multisubunit complexes succinate dehydrogenase (complex II, CII), ubiquinol-cytochrome c oxidoreductase (cytochrome b-c1 complex, complex III, CIII) and cytochrome c oxidase (complex IV, CIV), that cooperate to transfer electrons derived from NADH and succinate to molecular oxygen, creating an electrochemical gradient over the inner membrane that drives transmembrane transport and the ATP synthase. Cytochrome c oxidase is the component of the respiratory chain that catalyzes the reduction of oxygen to water. Electrons originating from reduced cytochrome c in the intermembrane space (IMS) are transferred via the dinuclear copper A center (CU(A)) of subunit 2 and heme A of subunit 1 to the active site in subunit 1, a binuclear center (BNC) formed by heme A3 and copper B (CU(B)). The BNC reduces molecular oxygen to 2 water molecules using 4 electrons from cytochrome c in the IMS and 4 protons from the mitochondrial matrix. This chain is Cytochrome c oxidase subunit 3 (mt-co3), found in Tetraodon nigroviridis (Spotted green pufferfish).